Here is a 1338-residue protein sequence, read N- to C-terminus: Aldehyde oxidase (1338 aa).

A 2Fe-2S ferredoxin-type domain is found at Ser5 to Ile92. The [2Fe-2S] cluster site is built by Cys44, Cys49, Cys52, and Cys74. Gln113 is a binding site for Mo-molybdopterin. Residues Cys114, Cys117, Cys149, and Cys151 each coordinate [2Fe-2S] cluster. Cys151 is a Mo-molybdopterin binding site. Residues Phe236 to Lys421 form the FAD-binding PCMH-type domain. FAD contacts are provided by residues Val264–Val271, Ala345, Ser354, His358, Asp367, and Leu411. Mo-molybdopterin is bound by residues Ala806–Phe807 and Met1047. Ser1068 bears the Phosphoserine mark. Mo-molybdopterin contacts are provided by residues Gly1088–Val1091, Gln1203, and Leu1268. The active-site Proton acceptor; for azaheterocycle hydroxylase activity is Glu1270.

Belongs to the xanthine dehydrogenase family. Homodimer. [2Fe-2S] cluster is required as a cofactor. The cofactor is FAD. Mo-molybdopterin serves as cofactor. Abundant in liver, expressed in adipose tissue and at lower levels in lung, skeletal muscle, pancreas. In contrast to mice, no significant gender difference in AOX1 expression level (at protein level).

It is found in the cytoplasm. It catalyses the reaction an aldehyde + O2 + H2O = a carboxylate + H2O2 + H(+). The catalysed reaction is retinal + O2 + H2O = retinoate + H2O2 + H(+). Its activity is regulated as follows. Is very potently inhibited by raloxifene. Also inhibited by estradiol, ethinyl estradiol, hydralazine, menadione, isovanillin and thioridazine. Not inhibited by allopurinol, a xanthine dehydrogenase potent inhibitor. Oxidase with broad substrate specificity, oxidizing aromatic azaheterocycles, such as N1-methylnicotinamide, N-methylphthalazinium and phthalazine, as well as aldehydes, such as benzaldehyde, retinal, pyridoxal, and vanillin. Plays a key role in the metabolism of xenobiotics and drugs containing aromatic azaheterocyclic substituents. Participates in the bioactivation of prodrugs such as famciclovir, catalyzing the oxidation step from 6-deoxypenciclovir to penciclovir, which is a potent antiviral agent. Is probably involved in the regulation of reactive oxygen species homeostasis. May be a prominent source of superoxide generation via the one-electron reduction of molecular oxygen. May also catalyze nitric oxide (NO) production via the reduction of nitrite to NO with NADH or aldehyde as electron donor. May play a role in adipogenesis. This chain is Aldehyde oxidase, found in Homo sapiens (Human).